A 419-amino-acid chain; its full sequence is UDP-N-acetylglucosamine 1-carboxyvinyltransferase (419 aa).

22 to 23 (KN) contacts phosphoenolpyruvate. Arginine 91 lines the UDP-N-acetyl-alpha-D-glucosamine pocket. Cysteine 115 functions as the Proton donor in the catalytic mechanism. Position 115 is a 2-(S-cysteinyl)pyruvic acid O-phosphothioketal (cysteine 115). UDP-N-acetyl-alpha-D-glucosamine is bound by residues 120–124 (RPVDL), 160–163 (KVSV), aspartate 305, and isoleucine 327.

This sequence belongs to the EPSP synthase family. MurA subfamily.

The protein resides in the cytoplasm. The enzyme catalyses phosphoenolpyruvate + UDP-N-acetyl-alpha-D-glucosamine = UDP-N-acetyl-3-O-(1-carboxyvinyl)-alpha-D-glucosamine + phosphate. It functions in the pathway cell wall biogenesis; peptidoglycan biosynthesis. Its function is as follows. Cell wall formation. Adds enolpyruvyl to UDP-N-acetylglucosamine. The protein is UDP-N-acetylglucosamine 1-carboxyvinyltransferase of Klebsiella pneumoniae (strain 342).